The primary structure comprises 134 residues: MAQGRRVERVAALIRKETSELLINGIRDERVHKGMVSITSVEVAGDLQHCKIFVSIFGEPNDQNEVMEGLEAASGFLRGELGRRLQMRRAPEVKFQLDRGLEKGTSVLGLLNQLEDQRQERGEIPPGSDELQPD.

The segment at 115 to 134 is disordered; sequence EDQRQERGEIPPGSDELQPD.

The protein belongs to the RbfA family. As to quaternary structure, monomer. Binds 30S ribosomal subunits, but not 50S ribosomal subunits or 70S ribosomes.

It localises to the cytoplasm. One of several proteins that assist in the late maturation steps of the functional core of the 30S ribosomal subunit. Associates with free 30S ribosomal subunits (but not with 30S subunits that are part of 70S ribosomes or polysomes). Required for efficient processing of 16S rRNA. May interact with the 5'-terminal helix region of 16S rRNA. The protein is Ribosome-binding factor A of Synechococcus sp. (strain CC9902).